The sequence spans 427 residues: Serine/threonine-protein kinase AFC2 (427 aa).

The Protein kinase domain occupies 98–423 (YKIYSKMGEG…AREALRHPFF (326 aa)). ATP is bound by residues 104-112 (MGEGTFGQV) and Lys127. The Proton acceptor role is filled by Asp223.

This sequence belongs to the protein kinase superfamily. CMGC Ser/Thr protein kinase family. Lammer subfamily.

The enzyme catalyses L-seryl-[protein] + ATP = O-phospho-L-seryl-[protein] + ADP + H(+). It catalyses the reaction L-threonyl-[protein] + ATP = O-phospho-L-threonyl-[protein] + ADP + H(+). It carries out the reaction L-tyrosyl-[protein] + ATP = O-phospho-L-tyrosyl-[protein] + ADP + H(+). The sequence is that of Serine/threonine-protein kinase AFC2 (AFC2) from Arabidopsis thaliana (Mouse-ear cress).